A 242-amino-acid polypeptide reads, in one-letter code: Agamous-like MADS-box protein AGL8 (242 aa).

In terms of domain architecture, MADS-box spans 3 to 57; that stretch reads RGRVQLKRIENKINRQVTFSKRRSGLLKKAHEISVLCDAEVALIVFSSKGKLFEY. The region spanning 88 to 178 is the K-box domain; the sequence is SENWVLEHAK…LKKIKEREKK (91 aa). A coiled-coil region spans residues 89 to 178; sequence ENWVLEHAKL…LKKIKEREKK (90 aa).

In terms of assembly, homodimer capable of binding to CArG-box sequences. Vascular tissue of cauline leaves, floral shoot apex and valves of carpels and fruits.

Its subcellular location is the nucleus. Probable transcription factor that promotes early floral meristem identity in synergy with APETALA1 and CAULIFLOWER. Is required subsequently for the transition of an inflorescence meristem into a floral meristem. Seems to be partially redundant to the function of APETALA1 and CAULIFLOWER in the up-regulation of LEAFY. Is also required for normal pattern of cell division, expansion and differentiation during morphogenesis of the silique. Probably not required for fruit elongation but instead is required to prevent ectopic activity of IND. Represses SAUR10 expression in stems and inflorescence branches. In Arabidopsis thaliana (Mouse-ear cress), this protein is Agamous-like MADS-box protein AGL8 (AGL8).